The primary structure comprises 209 residues: LexA repressor (209 aa).

The segment at residues 28-48 is a DNA-binding region (H-T-H motif); it reads RVELAKILGFRSANAAEEHLK. Active-site for autocatalytic cleavage activity residues include serine 126 and lysine 163.

The protein belongs to the peptidase S24 family. As to quaternary structure, homodimer.

The enzyme catalyses Hydrolysis of Ala-|-Gly bond in repressor LexA.. In terms of biological role, represses a number of genes involved in the response to DNA damage (SOS response), including recA and lexA. In the presence of single-stranded DNA, RecA interacts with LexA causing an autocatalytic cleavage which disrupts the DNA-binding part of LexA, leading to derepression of the SOS regulon and eventually DNA repair. In Psychromonas ingrahamii (strain DSM 17664 / CCUG 51855 / 37), this protein is LexA repressor.